The primary structure comprises 1011 residues: RAS protein activator like-3 (1011 aa).

The tract at residues 1 to 38 (MDPPSPSRTSQTQPTATSPLTSYRWHTGGGGEKAAGGF) is disordered. The span at 7 to 22 (SRTSQTQPTATSPLTS) shows a compositional bias: low complexity. Residues Ser18 and Ser51 each carry the phosphoserine modification. 3 disordered regions span residues 52-136 (HQEP…PVWD), 151-197 (GGEE…GPNQ), and 209-230 (KEKKKARLEPRDGPPSALGSRE). Over residues 81–95 (SRLRLSKALWGRHKN) the composition is skewed to basic residues. The span at 100–117 (PDPEPEQEAPELEPEPEL) shows a compositional bias: acidic residues. A compositionally biased stretch (pro residues) spans 118 to 131 (EPPTPQIPEAPTPN). Phosphoserine occurs at positions 164, 166, 167, and 170. The segment covering 179–190 (RDPDRMPGKTEP) has biased composition (basic and acidic residues). The 97-residue stretch at 197 to 293 (QVHNVRGLLK…WIEDLRRQFQ (97 aa)) folds into the PH domain. 3 positions are modified to phosphoserine: Ser224, Ser228, and Ser231. Phosphothreonine is present on Thr234. In terms of domain architecture, C2 spans 284–404 (WIEDLRRQFQ…APAAGLERWF (121 aa)). One can recognise a Ras-GAP domain in the interval 474–682 (GRAQALVTDL…PAMQCFLDQV (209 aa)). Disordered regions lie at residues 756-885 (QVHS…LGTH) and 987-1011 (LSPRTRGSWSQPQPLKAPCLNGDTT). A phosphoserine mark is found at Ser787 and Ser790. The segment covering 792–808 (RRSESWARPRPDEERPL) has biased composition (basic and acidic residues). Polar residues-rich tracts occupy residues 871 to 882 (QMDQPQDRNQAL) and 987 to 999 (LSPRTRGSWSQPQ). Positions 888–988 (VNKLAELQCE…RDAVQSLQLS (101 aa)) form a coiled coil. Phosphoserine is present on Ser988.

In terms of tissue distribution, predominantly expressed in cells of hematopoietic lineages.

It is found in the cytoplasm. Its subcellular location is the cell cortex. In terms of biological role, functions as a Ras GTPase-activating protein. Plays an important role in the expansion and functions of natural killer T (NKT) cells in the liver by negatively regulating RAS activity and the down-stream ERK signaling pathway. In Homo sapiens (Human), this protein is RAS protein activator like-3 (RASAL3).